The following is a 434-amino-acid chain: Glucose-1-phosphate adenylyltransferase (434 aa).

Alpha-D-glucose 1-phosphate-binding positions include Y112, G178, 193–194 (EK), and S211.

The protein belongs to the bacterial/plant glucose-1-phosphate adenylyltransferase family. As to quaternary structure, homotetramer.

It carries out the reaction alpha-D-glucose 1-phosphate + ATP + H(+) = ADP-alpha-D-glucose + diphosphate. It functions in the pathway glycan biosynthesis; glycogen biosynthesis. Functionally, involved in the biosynthesis of ADP-glucose, a building block required for the elongation reactions to produce glycogen. Catalyzes the reaction between ATP and alpha-D-glucose 1-phosphate (G1P) to produce pyrophosphate and ADP-Glc. The polypeptide is Glucose-1-phosphate adenylyltransferase (Mannheimia succiniciproducens (strain KCTC 0769BP / MBEL55E)).